The primary structure comprises 469 residues: Glutamate--tRNA ligase (469 aa).

Positions 11–21 (PSPTGFIHLGN) match the 'HIGH' region motif. Over residues 114–131 (QREAGEKPRYDGTWRPEP) the composition is skewed to basic and acidic residues. A disordered region spans residues 114–139 (QREAGEKPRYDGTWRPEPGKVLPEPP). Positions 243 to 247 (KMSKR) match the 'KMSKS' region motif. Lys246 contacts ATP.

It belongs to the class-I aminoacyl-tRNA synthetase family. Glutamate--tRNA ligase type 1 subfamily. As to quaternary structure, monomer.

The protein localises to the cytoplasm. The enzyme catalyses tRNA(Glu) + L-glutamate + ATP = L-glutamyl-tRNA(Glu) + AMP + diphosphate. Catalyzes the attachment of glutamate to tRNA(Glu) in a two-step reaction: glutamate is first activated by ATP to form Glu-AMP and then transferred to the acceptor end of tRNA(Glu). In Paraburkholderia xenovorans (strain LB400), this protein is Glutamate--tRNA ligase.